Reading from the N-terminus, the 55-residue chain is Large ribosomal subunit protein bL33 (55 aa).

It belongs to the bacterial ribosomal protein bL33 family.

The sequence is that of Large ribosomal subunit protein bL33 from Leifsonia xyli subsp. xyli (strain CTCB07).